A 1057-amino-acid chain; its full sequence is Carbamoyl phosphate synthase large chain (1057 aa).

Residues 1–401 are carboxyphosphate synthetic domain; that stretch reads MPKNKDINTI…SLLKAIRSLE (401 aa). Residues R129, R169, G175, G176, K208, I210, E215, G241, I242, H243, Q284, and E298 each coordinate ATP. The ATP-grasp 1 domain occupies 133 to 327; sequence RSLMNELDVP…IAKLAAKIAV (195 aa). Residues Q284, E298, and N300 each contribute to the Mg(2+) site. The Mn(2+) site is built by Q284, E298, and N300. Residues 402–546 are oligomerization domain; that stretch reads YGVHHLGLPN…YGTYERDNES (145 aa). The carbamoyl phosphate synthetic domain stretch occupies residues 547–929; it reads VVTDKEKVIV…ALFKGLTASG (383 aa). An ATP-grasp 2 domain is found at 671 to 861; that stretch reads EALLNKIDVP…MAQLAMRAIL (191 aa). Residues R707, R746, L748, E752, G777, V778, H779, S780, Q820, and E832 each contribute to the ATP site. Mg(2+) contacts are provided by Q820, E832, and N834. Residues Q820, E832, and N834 each coordinate Mn(2+). Residues 930–1057 form the MGS-like domain; the sequence is VEVKDHGTVL…ESMSFTMKQM (128 aa). Positions 930–1057 are allosteric domain; sequence VEVKDHGTVL…ESMSFTMKQM (128 aa).

It belongs to the CarB family. In terms of assembly, composed of two chains; the small (or glutamine) chain promotes the hydrolysis of glutamine to ammonia, which is used by the large (or ammonia) chain to synthesize carbamoyl phosphate. Tetramer of heterodimers (alpha,beta)4. The cofactor is Mg(2+). It depends on Mn(2+) as a cofactor.

It catalyses the reaction hydrogencarbonate + L-glutamine + 2 ATP + H2O = carbamoyl phosphate + L-glutamate + 2 ADP + phosphate + 2 H(+). The catalysed reaction is hydrogencarbonate + NH4(+) + 2 ATP = carbamoyl phosphate + 2 ADP + phosphate + 2 H(+). The protein operates within amino-acid biosynthesis; L-arginine biosynthesis; carbamoyl phosphate from bicarbonate: step 1/1. It participates in pyrimidine metabolism; UMP biosynthesis via de novo pathway; (S)-dihydroorotate from bicarbonate: step 1/3. Its function is as follows. Large subunit of the glutamine-dependent carbamoyl phosphate synthetase (CPSase). CPSase catalyzes the formation of carbamoyl phosphate from the ammonia moiety of glutamine, carbonate, and phosphate donated by ATP, constituting the first step of 2 biosynthetic pathways, one leading to arginine and/or urea and the other to pyrimidine nucleotides. The large subunit (synthetase) binds the substrates ammonia (free or transferred from glutamine from the small subunit), hydrogencarbonate and ATP and carries out an ATP-coupled ligase reaction, activating hydrogencarbonate by forming carboxy phosphate which reacts with ammonia to form carbamoyl phosphate. The sequence is that of Carbamoyl phosphate synthase large chain from Staphylococcus carnosus (strain TM300).